The primary structure comprises 359 residues: 3-dehydroquinate synthase (359 aa).

Residues 71–76 (DGEQYK), 105–109 (GVIGD), 129–130 (TT), lysine 142, lysine 151, and 169–172 (CLAT) each bind NAD(+). 3 residues coordinate Zn(2+): glutamate 184, histidine 247, and histidine 264.

Belongs to the sugar phosphate cyclases superfamily. Dehydroquinate synthase family. It depends on Co(2+) as a cofactor. Zn(2+) serves as cofactor. NAD(+) is required as a cofactor.

Its subcellular location is the cytoplasm. The enzyme catalyses 7-phospho-2-dehydro-3-deoxy-D-arabino-heptonate = 3-dehydroquinate + phosphate. Its pathway is metabolic intermediate biosynthesis; chorismate biosynthesis; chorismate from D-erythrose 4-phosphate and phosphoenolpyruvate: step 2/7. In terms of biological role, catalyzes the conversion of 3-deoxy-D-arabino-heptulosonate 7-phosphate (DAHP) to dehydroquinate (DHQ). In Baumannia cicadellinicola subsp. Homalodisca coagulata, this protein is 3-dehydroquinate synthase.